The chain runs to 112 residues: Integration host factor subunit alpha (112 aa).

The protein belongs to the bacterial histone-like protein family. As to quaternary structure, heterodimer of an alpha and a beta chain.

This protein is one of the two subunits of integration host factor, a specific DNA-binding protein that functions in genetic recombination as well as in transcriptional and translational control. The polypeptide is Integration host factor subunit alpha (Rhizobium etli (strain ATCC 51251 / DSM 11541 / JCM 21823 / NBRC 15573 / CFN 42)).